The following is a 260-amino-acid chain: Snake venom serine protease homolog (260 aa).

The N-terminal stretch at 1–18 (MVLVRVLANLLMLQLSYA) is a signal peptide. The propeptide occupies 19–24 (QKSSEL). The Peptidase S1 domain occupies 25-251 (IIGGDECNIN…HLDWIKSIIA (227 aa)). 6 disulfide bridges follow: cysteine 31–cysteine 165, cysteine 52–cysteine 68, cysteine 100–cysteine 258, cysteine 144–cysteine 212, cysteine 176–cysteine 191, and cysteine 202–cysteine 227. Aspartate 112 acts as the Charge relay system in catalysis. Residues asparagine 123 and asparagine 124 are each glycosylated (N-linked (GlcNAc...) asparagine). Residue serine 206 is the Charge relay system of the active site.

Belongs to the peptidase S1 family. Snake venom subfamily. In terms of tissue distribution, expressed by the venom gland.

It localises to the secreted. Snake venom serine protease homolog. May act in the hemostasis system of the prey. The polypeptide is Snake venom serine protease homolog (Protobothrops jerdonii (Jerdon's pitviper)).